The following is a 361-amino-acid chain: UDP-D-xylose:L-fucose alpha-1,3-D-xylosyltransferase 1 (361 aa).

The tract at residues 1-21 (MEQKQHILKQSTFSSSPSSYS) is disordered. At 1 to 34 (MEQKQHILKQSTFSSSPSSYSSISDRPISLLSRN) the chain is on the cytoplasmic side. The segment covering 11 to 21 (STFSSSPSSYS) has biased composition (low complexity). Residues 35 to 55 (GLLLLLLALVLLLGVLLPWPG) traverse the membrane as a helical; Signal-anchor for type II membrane protein segment. Residues 56–361 (SPLFLFPNRL…ALESPLGKLE (306 aa)) lie on the Lumenal side of the membrane. N-linked (GlcNAc...) asparagine glycosylation is found at Asn92 and Asn167. The short motif at 190–192 (DVD) is the DXD motif element. Residues Asn222 and Asn286 are each glycosylated (N-linked (GlcNAc...) asparagine).

This sequence belongs to the glycosyltransferase 77 family. Mn(2+) is required as a cofactor. Mg(2+) serves as cofactor. Post-translationally, glycosylated. Expressed in roots, rosette leaves, cauline leaves and stems.

The protein resides in the golgi apparatus membrane. Catalyzes the transfer of D-xylose from UDP-alpha-D-xylose onto L-fucose. Probably involved in the biosynthesis of rhamnogalacturonan II (RG-II) through xylosylation of the internal fucose moiety of the A-chain of RG-II, a structurally complex pectic polysaccharide of the primary cell wall. RG-II is essential for the cell wall integrity of rapidly growing tissues such as roots and pollen tube growth and elongation. In Arabidopsis thaliana (Mouse-ear cress), this protein is UDP-D-xylose:L-fucose alpha-1,3-D-xylosyltransferase 1.